The following is a 300-amino-acid chain: D-alanine--D-alanine ligase (300 aa).

In terms of domain architecture, ATP-grasp spans 99–293 (KKILKYANIN…FAELLNSIVK (195 aa)). 126 to 181 (IEKIGYPVFVKPNSGGSSVATNLVKDGDGIKEAVELALKYDKEVMIENYTKGEEIT) contacts ATP. Mg(2+) is bound by residues Asp-248, Glu-260, and Asn-262.

This sequence belongs to the D-alanine--D-alanine ligase family. It depends on Mg(2+) as a cofactor. The cofactor is Mn(2+).

Its subcellular location is the cytoplasm. The enzyme catalyses 2 D-alanine + ATP = D-alanyl-D-alanine + ADP + phosphate + H(+). Its pathway is cell wall biogenesis; peptidoglycan biosynthesis. Functionally, cell wall formation. The chain is D-alanine--D-alanine ligase from Clostridium botulinum (strain 657 / Type Ba4).